A 489-amino-acid polypeptide reads, in one-letter code: Betaine aldehyde dehydrogenase (489 aa).

2 residues coordinate K(+): Thr26 and Asp93. 150 to 152 (GAW) serves as a coordination point for NAD(+). Lys162 serves as the catalytic Charge relay system. NAD(+) is bound at residue 176–179 (KPSE). Residue Val180 participates in K(+) binding. 229–232 (GVET) provides a ligand contact to NAD(+). Leu245 serves as a coordination point for K(+). Catalysis depends on Glu251, which acts as the Proton acceptor. Residues Gly253, Cys285, and Glu386 each contribute to the NAD(+) site. The active-site Nucleophile is the Cys285. The residue at position 285 (Cys285) is a Cysteine sulfenic acid (-SOH). The K(+) site is built by Lys456 and Gly459. Glu463 (charge relay system) is an active-site residue.

This sequence belongs to the aldehyde dehydrogenase family. In terms of assembly, dimer of dimers. It depends on K(+) as a cofactor.

It catalyses the reaction betaine aldehyde + NAD(+) + H2O = glycine betaine + NADH + 2 H(+). Its pathway is amine and polyamine biosynthesis; betaine biosynthesis via choline pathway; betaine from betaine aldehyde: step 1/1. Its function is as follows. Involved in the biosynthesis of the osmoprotectant glycine betaine. Catalyzes the irreversible oxidation of betaine aldehyde to the corresponding acid. The sequence is that of Betaine aldehyde dehydrogenase from Burkholderia orbicola (strain MC0-3).